Reading from the N-terminus, the 265-residue chain is Probable cell division protein kinase ECU08_0230 (265 aa).

Positions 4–263 constitute a Protein kinase domain; sequence YILGALIGSG…IMEILENEYG (260 aa). ATP-binding positions include 10–18 and K33; that span reads IGSGTYGEV. The active-site Proton acceptor is the D121.

The protein belongs to the protein kinase superfamily. CMGC Ser/Thr protein kinase family. CDC2/CDKX subfamily.

Its subcellular location is the nucleus. The enzyme catalyses L-seryl-[protein] + ATP = O-phospho-L-seryl-[protein] + ADP + H(+). It catalyses the reaction L-threonyl-[protein] + ATP = O-phospho-L-threonyl-[protein] + ADP + H(+). Functionally, may play a role in the control of the eukaryotic cell cycle. This is Probable cell division protein kinase ECU08_0230 from Encephalitozoon cuniculi (strain GB-M1) (Microsporidian parasite).